Here is a 1452-residue protein sequence, read N- to C-terminus: Arf-GAP with Rho-GAP domain, ANK repeat and PH domain-containing protein 1 (1452 aa).

An SAM domain is found at 6-70; the sequence is DAALSVAEWL…LAGLHRAHAP (65 aa). Residues 81-90 form a required for interaction with SH3KBP1 region; the sequence is PVPMKRHIFR. 2 disordered regions span residues 87-258 and 271-304; these read HIFR…LPSR and EGEE…LNPP. Composition is skewed to pro residues over residues 92–104, 154–167, and 205–225; these read PPVP…PPPT, SVPP…PPYP, and PLQP…PPRL. Composition is skewed to acidic residues over residues 228 to 239 and 271 to 286; these read EFDDSDYDDVPE and EGEE…DDDH. At Ser-232 the chain carries Phosphoserine. At Tyr-234 the chain carries Phosphotyrosine; by PTK6. The PH 1 domain maps to 329–421; the sequence is PVIKAGWLDK…WMQALQQAVV (93 aa). Ser-430 is modified (phosphoserine). One can recognise a PH 2 domain in the interval 442–531; the sequence is QPDRAGSLEL…WLEAMQGAIA (90 aa). The residue at position 506 (Tyr-506) is a Phosphotyrosine. The Arf-GAP domain occupies 537-662; the sequence is SEVAERIWAA…RYHPLFGNQE (126 aa). The C4-type zinc finger occupies 552 to 575; sequence CADCGAAQPDWASINLCVVICKRC. Phosphoserine is present on Ser-740. Residues 745-852 form the PH 3 domain; that stretch reads TVSHSGFLYK…WVKCIAKAFV (108 aa). The 186-residue stretch at 956–1141 folds into the Rho-GAP domain; sequence ASLGDTLSEQ…DLINHYVVVF (186 aa). A Ras-associating domain is found at 1174 to 1263; it reads GDFICTVYLE…SHLVVKKYQS (90 aa). A PH 4 domain is found at 1276–1398; sequence GDTKHGMMKF…WFATFLSVQH (123 aa). 2 positions are modified to phosphoserine: Ser-1430 and Ser-1437.

As to quaternary structure, interacts with SH3KBP1/CIN85 (via SH3 domains). The interaction is independent of EGF and does not affect ARAP1 GTPase-activating activity but is involved in regulating ubiquitination and endocytic trafficking of EGFR. ARAP1 competes with E3 ubiquitin-protein ligase CBL for binding to SH3KBP1, preventing interaction of CBL with SH3KBP1; this is likely to regulate SH3KBP1-mediated internalization of EGFR. Interacts with TNFRSF10A. Post-translationally, phosphorylated by PTK6 following EGF stimulation which enhances EGFR signaling by delaying EGFR down-regulation; the interaction is mediated by the SH2 domain of PTK6. Phosphorylation promotes association with the Golgi apparatus and endosomes. Expressed in the retina where it is detected in Mueller glia (at protein level). Also detected in the retinal pigment epithelium (at protein level). Expressed in osteoclasts (at protein level).

The protein resides in the cytoplasm. It localises to the golgi apparatus. Its subcellular location is the trans-Golgi network. The protein localises to the golgi stack membrane. It is found in the cell membrane. The protein resides in the endosome. It localises to the multivesicular body. Its subcellular location is the cell projection. The protein localises to the ruffle. It is found in the podosome. The protein resides in the early endosome. Functionally, phosphatidylinositol 3,4,5-trisphosphate-dependent GTPase-activating protein that modulates actin cytoskeleton remodeling by regulating ARF and RHO family members. Activated by phosphatidylinositol 3,4,5-trisphosphate (PtdIns(3,4,5)P3) binding and, to a lesser extent, by phosphatidylinositol 3,4-bisphosphate (PtdIns(3,4)P2) binding. Has a preference for ARF1 and ARF5. Positively regulates the ring size of circular dorsal ruffles and promotes macropinocytosis. Acts as a bridging factor in osteoclasts to control actin and membrane dynamics. Regulates the condensing of osteoclast podosomes into sealing zones which segregate the bone-facing membrane from other membrane domains and are required for osteoclast resorption activity. Also regulates recruitment of the AP-3 complex to endosomal membranes and trafficking of lysosomal membrane proteins to the ruffled membrane border of osteoclasts to modulate bone resorption. Regulates the endocytic trafficking of EGFR. Regulates the incorporation of CD63 and CD9 into multivesicular bodies. Required in the retinal pigment epithelium (RPE) for photoreceptor survival due to its role in promoting RPE phagocytosis. The sequence is that of Arf-GAP with Rho-GAP domain, ANK repeat and PH domain-containing protein 1 from Mus musculus (Mouse).